We begin with the raw amino-acid sequence, 557 residues long: NAC domain-containing protein 17 (557 aa).

An NAC domain is found at 16-166 (SAPGFRFHPT…YYALYKLFKK (151 aa)). The DNA-binding element occupies 115–172 (VGLKKTLVFYRGRAPSGERTDWVMHEYTMDEDELGRCKNPQEYYALYKLFKKSGAGPK). A helical transmembrane segment spans residues 526-546 (FLLLSIVGALCAIFWVLVATV).

As to expression, expressed in roots, rosette leaves, cauline leaves, shoot apex, stems and flowers.

The protein resides in the endoplasmic reticulum membrane. It localises to the nucleus. Functionally, transcriptional activator activated by proteolytic cleavage through regulated intramembrane proteolysis (RIP). Transcriptional activator that acts as a positive regulator of AOX1A during mitochondrial dysfunction. Binds directly to AOX1A promoter. Mediates mitochondrial retrograde signaling. This chain is NAC domain-containing protein 17, found in Arabidopsis thaliana (Mouse-ear cress).